The following is a 345-amino-acid chain: Probable glucan endo-1,3-beta-glucosidase BG4 (345 aa).

An N-terminal signal peptide occupies residues 1-22; sequence MLYSPKKLFLFFLSCIVLYVNS. Asparagine 23 and asparagine 119 each carry an N-linked (GlcNAc...) asparagine glycan. Glutamate 128 serves as the catalytic Proton donor. Glutamate 267 (nucleophile) is an active-site residue. 2 N-linked (GlcNAc...) asparagine glycosylation sites follow: asparagine 277 and asparagine 306.

The protein belongs to the glycosyl hydrolase 17 family.

It is found in the secreted. It carries out the reaction Hydrolysis of (1-&gt;3)-beta-D-glucosidic linkages in (1-&gt;3)-beta-D-glucans.. Functionally, may play a role in plant defense against pathogens. The chain is Probable glucan endo-1,3-beta-glucosidase BG4 from Arabidopsis thaliana (Mouse-ear cress).